We begin with the raw amino-acid sequence, 934 residues long: 2-oxoglutarate dehydrogenase E1 component (934 aa).

This sequence belongs to the alpha-ketoglutarate dehydrogenase family. Homodimer. Part of the 2-oxoglutarate dehydrogenase (OGDH) complex composed of E1 (2-oxoglutarate dehydrogenase), E2 (dihydrolipoamide succinyltransferase) and E3 (dihydrolipoamide dehydrogenase); the complex contains multiple copies of the three enzymatic components (E1, E2 and E3). Requires thiamine diphosphate as cofactor.

The catalysed reaction is N(6)-[(R)-lipoyl]-L-lysyl-[protein] + 2-oxoglutarate + H(+) = N(6)-[(R)-S(8)-succinyldihydrolipoyl]-L-lysyl-[protein] + CO2. Its function is as follows. E1 component of the 2-oxoglutarate dehydrogenase (OGDH) complex which catalyzes the decarboxylation of 2-oxoglutarate, the first step in the conversion of 2-oxoglutarate to succinyl-CoA and CO(2). The chain is 2-oxoglutarate dehydrogenase E1 component (sucA) from Coxiella burnetii (strain RSA 493 / Nine Mile phase I).